A 460-amino-acid polypeptide reads, in one-letter code: Elongation factor 1-alpha (460 aa).

Residue glycine 2 is modified to N,N,N-trimethylglycine. Lysine 3 carries the post-translational modification N6,N6-dimethyllysine; alternate. Lysine 3 is modified (N6-methyllysine; alternate). The tr-type G domain occupies 6–241 (KTHINVVVIG…DSIEPPKRPT (236 aa)). The segment at 15–22 (GHVDSGKS) is G1. A GTP-binding site is contributed by 15-22 (GHVDSGKS). The G2 stretch occupies residues 71-75 (GITID). At lysine 80 the chain carries N6,N6,N6-trimethyllysine. Positions 92–95 (DAPG) are G3. GTP contacts are provided by residues 92 to 96 (DAPGH) and 154 to 157 (NKMD). The interval 154–157 (NKMD) is G4. The tract at residues 193-195 (SGF) is G5. Lysine 317 bears the N6,N6-dimethyllysine; alternate mark. Lysine 317 carries the N6-methyllysine; alternate modification. An N6-methyllysine modification is found at lysine 391.

It belongs to the TRAFAC class translation factor GTPase superfamily. Classic translation factor GTPase family. EF-Tu/EF-1A subfamily.

It is found in the cytoplasm. Its function is as follows. This protein promotes the GTP-dependent binding of aminoacyl-tRNA to the A-site of ribosomes during protein biosynthesis. This Hypocrea jecorina (Trichoderma reesei) protein is Elongation factor 1-alpha (tef1).